We begin with the raw amino-acid sequence, 419 residues long: MNIFDELKARGLVFQTTDEAALSKALTEDMVSYYVGYDPTADSLHLGNLVLILTMKRLQMAGHKPYALVGGATGLIGDPSFKDSERSLQTKDTVTKWSGKIRSQLERFLDFENGENKAEMTNNYNWFENLTFIDFLRDVGKHFTVNYMISKDSVKSRMESGISYTEFAYQIMQGYDFYELNQLHNVTLQLGGSDQWGNMTAGTELLRRKANKQGHVITIPLITDSTGKKFGKSEGNAIWLDADKTSPYEMYQFWLNVDDADAVKMLKIFTFLSLEEIAEIEEQFEAARHERLAQKVLAREVVSLVHGKAAYEQAVKTSEILFGGGDLRQLDAKSILTGLKAAPQHQVTDDEDLTLVELLISAGIAPSKRQAREDITNGAIYINGERVQALDYVITDSDKIENRLTVIRRGKKKNFVLTY.

Position 34 (Tyr-34) interacts with L-tyrosine. Positions 39 to 48 (PTADSLHLGN) match the 'HIGH' region motif. Residues Tyr-169 and Gln-173 each contribute to the L-tyrosine site. The 'KMSKS' region signature appears at 229–233 (KFGKS). ATP is bound at residue Lys-232. Residues 353–419 (LTLVELLISA…GKKKNFVLTY (67 aa)) form the S4 RNA-binding domain.

It belongs to the class-I aminoacyl-tRNA synthetase family. TyrS type 1 subfamily. Homodimer.

The protein resides in the cytoplasm. The enzyme catalyses tRNA(Tyr) + L-tyrosine + ATP = L-tyrosyl-tRNA(Tyr) + AMP + diphosphate + H(+). In terms of biological role, catalyzes the attachment of tyrosine to tRNA(Tyr) in a two-step reaction: tyrosine is first activated by ATP to form Tyr-AMP and then transferred to the acceptor end of tRNA(Tyr). This chain is Tyrosine--tRNA ligase, found in Lactococcus lactis subsp. lactis (strain IL1403) (Streptococcus lactis).